A 98-amino-acid polypeptide reads, in one-letter code: Large ribosomal subunit protein uL23 (98 aa).

Belongs to the universal ribosomal protein uL23 family. As to quaternary structure, part of the 50S ribosomal subunit. Contacts protein L29, and trigger factor when it is bound to the ribosome.

In terms of biological role, one of the early assembly proteins it binds 23S rRNA. One of the proteins that surrounds the polypeptide exit tunnel on the outside of the ribosome. Forms the main docking site for trigger factor binding to the ribosome. The polypeptide is Large ribosomal subunit protein uL23 (Koribacter versatilis (strain Ellin345)).